Here is a 128-residue protein sequence, read N- to C-terminus: Fruiting body differentiation protein 16 (128 aa).

The N-terminal stretch at 1-19 (MLFSHIVFVALSVFGLVQA) is a signal peptide.

Plays a role in the regulation of fruiting body development. This is Fruiting body differentiation protein 16 from Flammulina velutipes (Agaricus velutipes).